Reading from the N-terminus, the 809-residue chain is Leucine-rich repeat and calponin homology domain-containing protein (809 aa).

A disordered region spans residues 27–53 (GSASLPGSGTGSGSGIGHAGNTSSSTS). Over residues 34–44 (SGTGSGSGIGH) the composition is skewed to gly residues. LRR repeat units follow at residues 72-96 (EAHF…GTKY), 98-121 (LTDT…VTTF), 122-144 (AFLE…VKQL), 145-168 (SSLT…CFLP), 170-189 (QVLL…LGRL), 191-213 (QTLT…LGEL), 214-236 (RSLR…LTCL), 238-258 (LISL…IRHM), and 260-282 (TLVE…CMRG). Disordered regions lie at residues 295-373 (TKDE…LHCV), 423-442 (LSYA…QDDD), and 490-550 (KHPN…VDDV). The segment covering 319-336 (HNSSGNVLEASTTGSTNN) has biased composition (polar residues). Residues 351 to 368 (GLDKRWSHDAPTKSKTDS) show a composition bias toward basic and acidic residues. Polar residues predominate over residues 518-532 (NTLPKSIMKQNSNQI). Residues 662-776 (QREETELMSQ…TVGELFRLHG (115 aa)) form the Calponin-homology (CH) domain. A disordered region spans residues 783–809 (GNSSGAATPTKSPTRTTRATMSPTPLA). Polar residues predominate over residues 788–809 (AATPTKSPTRTTRATMSPTPLA).

It localises to the cytoplasm. The protein localises to the cytoskeleton. It is found in the cell cortex. The protein resides in the cleavage furrow. In terms of biological role, may play a role in the stabilization of the actin-rich cell cortex during cell division. The protein is Leucine-rich repeat and calponin homology domain-containing protein of Drosophila melanogaster (Fruit fly).